The chain runs to 456 residues: Ammonium transporter Amt2 (456 aa).

A run of 11 helical transmembrane segments spans residues Leu18–Leu38, Ile61–Thr81, Trp109–Gly129, Ile141–Leu161, Ala170–Ile190, Ile211–Gly231, Val255–Phe275, Val281–Ala301, Ile304–Phe324, Val339–Val359, and Val377–Phe397.

Belongs to the ammonia transporter channel (TC 1.A.11.2) family. Homotrimer. Interacts with both GlnK1 and GlnK2 after ammonium shock.

It localises to the cell membrane. In terms of biological role, involved in the uptake of ammonium/ammonia (NH(4)(+)/NH(3)). Transport is electrogenic. The sequence is that of Ammonium transporter Amt2 from Haloferax mediterranei (strain ATCC 33500 / DSM 1411 / JCM 8866 / NBRC 14739 / NCIMB 2177 / R-4) (Halobacterium mediterranei).